Reading from the N-terminus, the 420-residue chain is L-rhamnose isomerase (420 aa).

3 residues coordinate Mn(2+): His-262, Asp-294, and Asp-296.

The protein belongs to the rhamnose isomerase family. In terms of assembly, homotetramer. Requires Mn(2+) as cofactor.

The protein localises to the cytoplasm. It catalyses the reaction L-rhamnopyranose = L-rhamnulose. The protein operates within carbohydrate degradation; L-rhamnose degradation; glycerone phosphate from L-rhamnose: step 1/3. In terms of biological role, catalyzes the interconversion of L-rhamnose and L-rhamnulose. This Pectobacterium carotovorum subsp. carotovorum (strain PC1) protein is L-rhamnose isomerase.